The sequence spans 543 residues: Glucose-6-phosphate isomerase (543 aa).

Residue glutamate 353 is the Proton donor of the active site. Active-site residues include histidine 384 and lysine 504.

It belongs to the GPI family.

The protein localises to the cytoplasm. The enzyme catalyses alpha-D-glucose 6-phosphate = beta-D-fructose 6-phosphate. It participates in carbohydrate biosynthesis; gluconeogenesis. The protein operates within carbohydrate degradation; glycolysis; D-glyceraldehyde 3-phosphate and glycerone phosphate from D-glucose: step 2/4. In terms of biological role, catalyzes the reversible isomerization of glucose-6-phosphate to fructose-6-phosphate. This Roseiflexus castenholzii (strain DSM 13941 / HLO8) protein is Glucose-6-phosphate isomerase.